Consider the following 765-residue polypeptide: MSGDHLHNDSQIEADFRLNDSHKHKDKHKDREHRHKEHKKEKDREKSKHSNSEHKDSEKKHKEKEKTKHKDGSSEKHKDKHKDRDKEKRKEEKVRASGDAKIKKEKENGFSSPPQIKDEPEDDGYFVPPKEDIKPLKRPRDEDDADYKPKKIKTEDTKKEKKRKLEEEEDGKLKKPKNKDKDKKVPEPDNKKKKPKKEEEQKWKWWEEERYPEGIKWKFLEHKGPVFAPPYEPLPENVKFYYDGKVMKLSPKAEEVATFFAKMLDHEYTTKEIFRKNFFKDWRKEMTNEEKNIITNLSKCDFTQMSQYFKAQTEARKQMSKEEKLKIKEENEKLLKEYGFCIMDNHKERIANFKIEPPGLFRGRGNHPKMGMLKRRIMPEDIIINCSKDAKVPSPPPGHKWKEVRHDNKVTWLVSWTENIQGSIKYIMLNPSSRIKGEKDWQKYETARRLKKCVDKIRNQYREDWKSKEMKVRQRAVALYFIDKLALRAGNEKEEGETADTVGCCSLRVEHINLHPELDGQEYVVEFDFLGKDSIRYYNKVPVEKRVFKNLQLFMENKQPEDDLFDRLNTGILNKHLQDLMEGLTAKVFRTYNASITLQQQLKELTAPDENIPAKILSYNRANRAVAILCNHQRAPPKTFEKSMMNLQTKIDAKKEQLADARRDLKSAKADAKVMKDAKTKKVVESKKKAVQRLEEQLMKLEVQATDREENKQIALGTSKLNYLDPRITVAWCKKWGVPIEKIYNKTQREKFAWAIDMADEDYEF.

Residues 1–23 are compositionally biased toward basic and acidic residues; it reads MSGDHLHNDSQIEADFRLNDSHK. Positions 1–199 are disordered; sequence MSGDHLHNDS…NKKKKPKKEE (199 aa). An N-acetylserine modification is found at S2. Residues S2 and S10 each carry the phosphoserine modification. The segment covering 24-39 has biased composition (basic residues); sequence HKDKHKDREHRHKEHK. The span at 40-108 shows a compositional bias: basic and acidic residues; sequence KEKDREKSKH…DAKIKKEKEN (69 aa). S57 is subject to Phosphoserine. K101 participates in a covalent cross-link: Glycyl lysine isopeptide (Lys-Gly) (interchain with G-Cter in SUMO2). K103 participates in a covalent cross-link: Glycyl lysine isopeptide (Lys-Gly) (interchain with G-Cter in SUMO); alternate. A Glycyl lysine isopeptide (Lys-Gly) (interchain with G-Cter in SUMO2); alternate cross-link involves residue K103. At S112 the chain carries Phosphoserine. K117 is covalently cross-linked (Glycyl lysine isopeptide (Lys-Gly) (interchain with G-Cter in SUMO); alternate). K117 participates in a covalent cross-link: Glycyl lysine isopeptide (Lys-Gly) (interchain with G-Cter in SUMO2); alternate. K117 participates in a covalent cross-link: Glycyl lysine isopeptide (Lys-Gly) (interchain with G-Cter in SUMO1); alternate. Residues 129 to 166 are compositionally biased toward basic and acidic residues; it reads PKEDIKPLKRPRDEDDADYKPKKIKTEDTKKEKKRKLE. Residues K134 and K148 each participate in a glycyl lysine isopeptide (Lys-Gly) (interchain with G-Cter in SUMO2) cross-link. K153 participates in a covalent cross-link: Glycyl lysine isopeptide (Lys-Gly) (interchain with G-Cter in SUMO); alternate. K153 is covalently cross-linked (Glycyl lysine isopeptide (Lys-Gly) (interchain with G-Cter in SUMO2); alternate). Residues K158 and K164 each participate in a glycyl lysine isopeptide (Lys-Gly) (interchain with G-Cter in SUMO2) cross-link. A Glycyl lysine isopeptide (Lys-Gly) (interchain with G-Cter in SUMO2); alternate cross-link involves residue K172. K172 carries the N6-acetyllysine; alternate modification. Basic and acidic residues predominate over residues 179–199; sequence KDKDKKVPEPDNKKKKPKKEE. K204 is covalently cross-linked (Glycyl lysine isopeptide (Lys-Gly) (interchain with G-Cter in SUMO2)). N6-acetyllysine is present on K280. Residue K336 forms a Glycyl lysine isopeptide (Lys-Gly) (interchain with G-Cter in SUMO2) linkage. Interaction with DNA stretches follow at residues 425 to 426 and 488 to 493; these read KY and RAGNEK. A Topo IB-type catalytic domain is found at 432–765; that stretch reads SSRIKGEKDW…IDMADEDYEF (334 aa). At S506 the chain carries Phosphoserine; by CK2. Residue K549 forms a Glycyl lysine isopeptide (Lys-Gly) (interchain with G-Cter in SUMO2) linkage. The tract at residues 585-587 is interaction with DNA; that stretch reads TAK. Residues K642, K700, and K712 each participate in a glycyl lysine isopeptide (Lys-Gly) (interchain with G-Cter in SUMO2) cross-link. The active-site O-(3'-phospho-DNA)-tyrosine intermediate is Y723.

It belongs to the type IB topoisomerase family. Monomer. Interacts with ERCC6. Interacts with TPRN; TPRN interacts with a number of DNA damage response proteins, is recruited to sites of DNA damage and may play a role in DNA damage repair. In terms of assembly, (Microbial infection) Interacts with SV40 Large T antigen; this interactions allows viral DNA replication. Sumoylated. Lys-117 is the main site of sumoylation. Sumoylation plays a role in partitioning TOP1 between nucleoli and nucleoplasm. Levels are dramatically increased on camptothecin (CPT) treatment. Post-translationally, phosphorylation at Ser-506 by CK2 increases binding to supercoiled DNA and sensitivity to camptothecin. Endothelial cells.

Its subcellular location is the nucleus. It is found in the nucleolus. The protein localises to the nucleoplasm. It carries out the reaction ATP-independent breakage of single-stranded DNA, followed by passage and rejoining.. With respect to regulation, specifically inhibited by camptothecin (CPT), a plant alkaloid with antitumor activity. In terms of biological role, releases the supercoiling and torsional tension of DNA introduced during the DNA replication and transcription by transiently cleaving and rejoining one strand of the DNA duplex. Introduces a single-strand break via transesterification at a target site in duplex DNA. The scissile phosphodiester is attacked by the catalytic tyrosine of the enzyme, resulting in the formation of a DNA-(3'-phosphotyrosyl)-enzyme intermediate and the expulsion of a 5'-OH DNA strand. The free DNA strand then rotates around the intact phosphodiester bond on the opposing strand, thus removing DNA supercoils. Finally, in the religation step, the DNA 5'-OH attacks the covalent intermediate to expel the active-site tyrosine and restore the DNA phosphodiester backbone. Regulates the alternative splicing of tissue factor (F3) pre-mRNA in endothelial cells. Involved in the circadian transcription of the core circadian clock component BMAL1 by altering the chromatin structure around the ROR response elements (ROREs) on the BMAL1 promoter. The protein is DNA topoisomerase 1 (TOP1) of Homo sapiens (Human).